Here is a 339-residue protein sequence, read N- to C-terminus: GTP 3',8-cyclase (339 aa).

The Radical SAM core domain occupies N20–D241. R29 is a GTP binding site. Positions 36 and 40 each coordinate [4Fe-4S] cluster. Y42 is a binding site for S-adenosyl-L-methionine. C43 contributes to the [4Fe-4S] cluster binding site. R78 is a binding site for GTP. G82 provides a ligand contact to S-adenosyl-L-methionine. T109 is a binding site for GTP. Residue S133 coordinates S-adenosyl-L-methionine. K170 is a binding site for GTP. Residue M204 participates in S-adenosyl-L-methionine binding. Positions 267 and 270 each coordinate [4Fe-4S] cluster. Position 272-274 (R272–R274) interacts with GTP. C284 serves as a coordination point for [4Fe-4S] cluster.

The protein belongs to the radical SAM superfamily. MoaA family. Monomer and homodimer. It depends on [4Fe-4S] cluster as a cofactor.

The enzyme catalyses GTP + AH2 + S-adenosyl-L-methionine = (8S)-3',8-cyclo-7,8-dihydroguanosine 5'-triphosphate + 5'-deoxyadenosine + L-methionine + A + H(+). It functions in the pathway cofactor biosynthesis; molybdopterin biosynthesis. Catalyzes the cyclization of GTP to (8S)-3',8-cyclo-7,8-dihydroguanosine 5'-triphosphate. The polypeptide is GTP 3',8-cyclase (Psychromonas ingrahamii (strain DSM 17664 / CCUG 51855 / 37)).